Consider the following 666-residue polypeptide: Enzymatic polyprotein (666 aa).

Asp-54 is an active-site residue. In terms of domain architecture, Reverse transcriptase spans 215-445 (ENPIDPIKSK…EKINFLGLEI (231 aa)).

This sequence belongs to the caulimoviridae enzymatic polyprotein family.

The catalysed reaction is DNA(n) + a 2'-deoxyribonucleoside 5'-triphosphate = DNA(n+1) + diphosphate. Functionally, encodes for at least two polypeptides: protease (PR) and reverse transcriptase (RT). The protease processes the polyprotein in cis. Reverse transcriptase is multifunctional enzyme that converts the viral RNA genome into dsDNA in viral cytoplasmic capsids. This enzyme displays a DNA polymerase activity that can copy either DNA or RNA templates, and a ribonuclease H (RNase H) activity that cleaves the RNA strand of RNA-DNA heteroduplexes in a partially processive 3'- to 5'-endonucleasic mode. Neo-synthesized pregenomic RNA (pgRNA) are encapsidated, and reverse-transcribed inside the nucleocapsid. Partial (+)DNA is synthesized from the (-)DNA template and generates the relaxed circular DNA (RC-DNA) genome. After budding and infection, the RC-DNA migrates in the nucleus, and is converted into a plasmid-like covalently closed circular DNA (cccDNA). The sequence is that of Enzymatic polyprotein from Figwort mosaic virus (strain DxS) (FMV).